Reading from the N-terminus, the 337-residue chain is Methylthioribose-1-phosphate isomerase (337 aa).

Residues 51 to 53, arginine 88, and glutamine 187 contribute to the substrate site; that span reads RGA. Aspartate 228 functions as the Proton donor in the catalytic mechanism. 238–239 contributes to the substrate binding site; that stretch reads NK.

The protein belongs to the eIF-2B alpha/beta/delta subunits family. MtnA subfamily.

It carries out the reaction 5-(methylsulfanyl)-alpha-D-ribose 1-phosphate = 5-(methylsulfanyl)-D-ribulose 1-phosphate. Its pathway is amino-acid biosynthesis; L-methionine biosynthesis via salvage pathway; L-methionine from S-methyl-5-thio-alpha-D-ribose 1-phosphate: step 1/6. Its function is as follows. Catalyzes the interconversion of methylthioribose-1-phosphate (MTR-1-P) into methylthioribulose-1-phosphate (MTRu-1-P). This Anaeromyxobacter sp. (strain Fw109-5) protein is Methylthioribose-1-phosphate isomerase.